The sequence spans 436 residues: Histidinol dehydrogenase (436 aa).

Positions 136, 198, and 221 each coordinate NAD(+). Residues S244, Q266, and H269 each contribute to the substrate site. Zn(2+) contacts are provided by Q266 and H269. Catalysis depends on proton acceptor residues E334 and H335. Substrate is bound by residues H335, D368, E422, and H427. A Zn(2+)-binding site is contributed by D368. A Zn(2+)-binding site is contributed by H427.

The protein belongs to the histidinol dehydrogenase family. The cofactor is Zn(2+).

It carries out the reaction L-histidinol + 2 NAD(+) + H2O = L-histidine + 2 NADH + 3 H(+). It participates in amino-acid biosynthesis; L-histidine biosynthesis; L-histidine from 5-phospho-alpha-D-ribose 1-diphosphate: step 9/9. Its function is as follows. Catalyzes the sequential NAD-dependent oxidations of L-histidinol to L-histidinaldehyde and then to L-histidine. The protein is Histidinol dehydrogenase of Dehalococcoides mccartyi (strain CBDB1).